A 204-amino-acid polypeptide reads, in one-letter code: Cytochrome c biogenesis ATP-binding export protein CcmA (204 aa).

The 202-residue stretch at 2-203 (LEADNLECVR…PAGTVRELRL (202 aa)) folds into the ABC transporter domain. 34–41 (GRNGAGKT) provides a ligand contact to ATP.

This sequence belongs to the ABC transporter superfamily. CcmA exporter (TC 3.A.1.107) family. As to quaternary structure, the complex is composed of two ATP-binding proteins (CcmA) and two transmembrane proteins (CcmB).

It is found in the cell inner membrane. The catalysed reaction is heme b(in) + ATP + H2O = heme b(out) + ADP + phosphate + H(+). Functionally, part of the ABC transporter complex CcmAB involved in the biogenesis of c-type cytochromes; once thought to export heme, this seems not to be the case, but its exact role is uncertain. Responsible for energy coupling to the transport system. The protein is Cytochrome c biogenesis ATP-binding export protein CcmA of Dechloromonas aromatica (strain RCB).